We begin with the raw amino-acid sequence, 494 residues long: Zinc metalloproteinase/disintegrin (494 aa).

Residues 1–20 (MIQVLLVTICLAVFPFQGSS) form the signal peptide. Residues 21–193 (KTLKSGNVND…KKASHLVATS (173 aa)) constitute a propeptide that is removed on maturation. Residues 201 to 396 (RYVQLVIVAD…HNPPCILNQA (196 aa)) enclose the Peptidase M12B domain. Cystine bridges form between cysteine 311/cysteine 391, cysteine 351/cysteine 375, and cysteine 353/cysteine 358. Histidine 336 serves as a coordination point for Zn(2+). Residue glutamate 337 is part of the active site. Residues histidine 340 and histidine 346 each coordinate Zn(2+). A propeptide spanning residues 410-431 (ELLQNSVNPCYDPVTCQPKEKE) is cleaved from the precursor. In terms of domain architecture, Disintegrin spans 417 to 478 (NPCYDPVTCQ…DCPRNPYKGE (62 aa)). Disulfide bonds link cysteine 433–cysteine 442, cysteine 438–cysteine 463, cysteine 439–cysteine 468, and cysteine 451–cysteine 470. A Cell attachment site motif is present at residues 455-457 (RGD). The propeptide occupies 482 to 494 (MEWPAPAKGSVLM).

This sequence belongs to the venom metalloproteinase (M12B) family. P-II subfamily. P-IIa sub-subfamily. In terms of assembly, monomer (disintegrin). In terms of tissue distribution, expressed by the venom gland.

It is found in the secreted. Impairs hemostasis in the envenomed animal. Functionally, inhibits ADP-induced platelet aggregation (IC(50)=168 nM). Inhibits alpha-5/beta-1 (ITGA5/ITGB1) integrin and induces the expression of a ligand-induced binding site epitope on beta-1 integrin subunit. Has a direct chemotactic stimulus on human neutrophils in vitro. This chain is Zinc metalloproteinase/disintegrin, found in Echis ocellatus (Ocellated saw-scaled viper).